The chain runs to 207 residues: Large ribosomal subunit protein bL25 (207 aa).

Belongs to the bacterial ribosomal protein bL25 family. CTC subfamily. Part of the 50S ribosomal subunit; part of the 5S rRNA/L5/L18/L25 subcomplex. Contacts the 5S rRNA. Binds to the 5S rRNA independently of L5 and L18.

In terms of biological role, this is one of the proteins that binds to the 5S RNA in the ribosome where it forms part of the central protuberance. In Orientia tsutsugamushi (strain Boryong) (Rickettsia tsutsugamushi), this protein is Large ribosomal subunit protein bL25.